The chain runs to 439 residues: Serine/threonine-protein kinase 2 (439 aa).

Residues 87–439 enclose the Protein kinase domain; sequence NDDFYHISTG…IFSDWINGGN (353 aa). Residues 93–101 and K117 contribute to the ATP site; that span reads ISTGGYGIV. Catalysis depends on D307, which acts as the Proton acceptor.

Belongs to the protein kinase superfamily. Ser/Thr protein kinase family. Poxviruses subfamily. In terms of processing, phosphorylated in vivo. Autophosphorylated in vitro.

The protein resides in the host endoplasmic reticulum. It is found in the host endoplasmic reticulum-Golgi intermediate compartment. It catalyses the reaction L-seryl-[protein] + ATP = O-phospho-L-seryl-[protein] + ADP + H(+). The catalysed reaction is L-threonyl-[protein] + ATP = O-phospho-L-threonyl-[protein] + ADP + H(+). Essential serine-protein kinase involved in the early stage of virion morphogenesis. The protein is Serine/threonine-protein kinase 2 (OPG054) of Vaccinia virus (strain Ankara) (VACV).